The following is a 152-amino-acid chain: Transcription elongation factor Spt5 (152 aa).

A KOW domain is found at 99–128 (PGDVVEVISGPFRGTQAQVIRVEEAKGEVV).

The protein belongs to the archaeal Spt5 family. Heterodimer composed of Spt4 and Spt5. Interacts with RNA polymerase (RNAP).

Stimulates transcription elongation. The polypeptide is Transcription elongation factor Spt5 (Saccharolobus solfataricus (strain ATCC 35092 / DSM 1617 / JCM 11322 / P2) (Sulfolobus solfataricus)).